Reading from the N-terminus, the 326-residue chain is Phospho-N-acetylmuramoyl-pentapeptide-transferase (326 aa).

10 helical membrane passes run 4 to 24 (IWVAFTVSLAVTLIAGPLVIP), 49 to 69 (TPTMGGIIFLAGTAAGGFLLI), 74 to 94 (GLIVLLMALGYGFIGFLDDYI), 109 to 129 (KLLGQVLLAAALAYWAVFEAG), 151 to 171 (LGWWPFLAFTVLLVVFMSNAV), 179 to 199 (GLAAGVSMLVALALVPVALAA), 203 to 223 (GVAAGMAALAGGCLGFLFFNF), 228 to 248 (VFMGDTGSLALGGGLCAAAVV), 254 to 274 (LFLIIGGIYVLEALSVIIQVI), and 303 to 323 (VVITFWALTLVFAAAGLAGLY).

This sequence belongs to the glycosyltransferase 4 family. MraY subfamily. The cofactor is Mg(2+).

It localises to the cell membrane. It carries out the reaction UDP-N-acetyl-alpha-D-muramoyl-L-alanyl-gamma-D-glutamyl-meso-2,6-diaminopimeloyl-D-alanyl-D-alanine + di-trans,octa-cis-undecaprenyl phosphate = di-trans,octa-cis-undecaprenyl diphospho-N-acetyl-alpha-D-muramoyl-L-alanyl-D-glutamyl-meso-2,6-diaminopimeloyl-D-alanyl-D-alanine + UMP. It participates in cell wall biogenesis; peptidoglycan biosynthesis. In terms of biological role, catalyzes the initial step of the lipid cycle reactions in the biosynthesis of the cell wall peptidoglycan: transfers peptidoglycan precursor phospho-MurNAc-pentapeptide from UDP-MurNAc-pentapeptide onto the lipid carrier undecaprenyl phosphate, yielding undecaprenyl-pyrophosphoryl-MurNAc-pentapeptide, known as lipid I. In Pelotomaculum thermopropionicum (strain DSM 13744 / JCM 10971 / SI), this protein is Phospho-N-acetylmuramoyl-pentapeptide-transferase.